The following is a 212-amino-acid chain: FMN-dependent NADH:quinone oxidoreductase (212 aa).

Residues Ser10, 16 to 18 (SFS), and 98 to 101 (MWNF) contribute to the FMN site.

Belongs to the azoreductase type 1 family. As to quaternary structure, homodimer. Requires FMN as cofactor.

It carries out the reaction 2 a quinone + NADH + H(+) = 2 a 1,4-benzosemiquinone + NAD(+). The catalysed reaction is N,N-dimethyl-1,4-phenylenediamine + anthranilate + 2 NAD(+) = 2-(4-dimethylaminophenyl)diazenylbenzoate + 2 NADH + 2 H(+). Quinone reductase that provides resistance to thiol-specific stress caused by electrophilic quinones. In terms of biological role, also exhibits azoreductase activity. Catalyzes the reductive cleavage of the azo bond in aromatic azo compounds to the corresponding amines. The chain is FMN-dependent NADH:quinone oxidoreductase from Desulfotalea psychrophila (strain LSv54 / DSM 12343).